Reading from the N-terminus, the 200-residue chain is MPIAELAVIKTVGGPLIAAALGVGAQVIYDGFRKGKDTSIINRLGRTMESISPVRDRIGKLSNVEGKPFREVHESLTRLLEDAKSIIEKYWKLRWSRHVCRKYRYIKKLESIELELVRVAREIQVHQWTDIKEMKAIQVHQWTDIKEMKAIQVDQWTDIKEMKAIQVDQWIDIKEMKAIQVDQWTDIKEMKAQISEKHNK.

One can recognise an RPW8 domain in the interval 1 to 157; sequence MPIAELAVIK…MKAIQVDQWT (157 aa). A helical transmembrane segment spans residues 7–29; that stretch reads AVIKTVGGPLIAAALGVGAQVIY. The stretch at 70–127 forms a coiled coil; it reads REVHESLTRLLEDAKSIIEKYWKLRWSRHVCRKYRYIKKLESIELELVRVAREIQVHQ.

It belongs to the plant RPW8 protein family.

The protein resides in the membrane. Probable disease resistance (R) protein. The chain is RPW8-like protein 4 (HR4) from Arabidopsis thaliana (Mouse-ear cress).